Consider the following 446-residue polypeptide: AP-2 complex subunit mu (446 aa).

Phosphoserine is present on residues Ser145, Ser151, and Ser152. Thr157 carries the phosphothreonine modification. Residues 177–445 form the MHD domain; sequence KNSIYIDIVE…STRAGTCEIR (269 aa).

The protein belongs to the adaptor complexes medium subunit family. Adaptor protein complex 2 (AP-2) is a heterotetramer composed of two large adaptins (alpha-type subunit apl3 and beta-type subunit apl1), a medium chain (mu-type subunit apm4) and a small adaptin (sigma-type subunit aps2).

The protein resides in the cell membrane. It is found in the membrane. The protein localises to the coated pit. Functionally, component of the adaptor complexes which link clathrin to receptors in coated vesicles. Clathrin-associated protein complexes are believed to interact with the cytoplasmic tails of membrane proteins, leading to their selection and concentration. AP50 is a subunit of the plasma membrane adaptor (Potential). The polypeptide is AP-2 complex subunit mu (apm4) (Schizosaccharomyces pombe (strain 972 / ATCC 24843) (Fission yeast)).